Reading from the N-terminus, the 153-residue chain is Transcriptional repressor NrdR (153 aa).

A zinc finger lies at 3-33 (CPYCNYKESKVIDSRHTDLKSIRRRRECESC). Residues 48 to 138 (LMVIKKDNSR…VYRQFKDINT (91 aa)) enclose the ATP-cone domain.

The protein belongs to the NrdR family. Zn(2+) serves as cofactor.

In terms of biological role, negatively regulates transcription of bacterial ribonucleotide reductase nrd genes and operons by binding to NrdR-boxes. This chain is Transcriptional repressor NrdR, found in Clostridioides difficile (strain 630) (Peptoclostridium difficile).